A 138-amino-acid chain; its full sequence is Glutaredoxin-like protein C5orf63 (138 aa).

An intrachain disulfide couples C41 to C44. Residues 55 to 64 show a composition bias toward basic and acidic residues; the sequence is ENRQPYKDQK. The tract at residues 55–88 is disordered; it reads ENRQPYKDQKLPGTRRRRSPSSPSHPHMASQSGK.

This sequence belongs to the glutaredoxin family. YDR286C subfamily.

The protein is Glutaredoxin-like protein C5orf63 (C5orf63) of Homo sapiens (Human).